Consider the following 265-residue polypeptide: Short-chain dehydrogenase/reductase phqE (265 aa).

Residues threonine 23, serine 24, isoleucine 26, serine 46, asparagine 47, lysine 50, aspartate 76, arginine 131, valine 203, and threonine 205 each coordinate NADP(+). Residues glycine 25–glycine 45 form a helical membrane-spanning segment.

This sequence belongs to the short-chain dehydrogenases/reductases (SDR) family. The cofactor is NADP(+).

Its subcellular location is the membrane. It participates in alkaloid biosynthesis. In terms of biological role, short-chain dehydrogenase/reductase; part of the gene cluster that mediates the biosynthesis of paraherquamide, a fungal indole alkaloid that belongs to a family of natural products containing a characteristic bicyclo[2.2.2]diazaoctane core. The first steps in the biosynthesis of paraherquamide is the production of the beta-methyl-proline precursor from L-isoleucine. They require oxidation of a terminally hydroxylated L-isoleucine to the corresponding aldehyde by enzymes which have still to be identified. Spontaneous cyclization and dehydration would yield the 4-methyl pyrolline-5-carboxylic acid, which is then reduced by the pyrroline-5-carboxylate reductase phqD leading to the beta-methyl-proline precursor. The next step of paraherquamide biosynthesis involves coupling of beta-methyl-proline and L-tryptophan by the bimodular NRPS phqB, to produce a monooxopiperazine intermediate. The reductase (R) domain of phqB utilizes NADPH for hydride transfer to reduce the thioester bond of the T domain-tethered linear dipeptide to a hemithioaminal intermediate, which spontaneously cleaves the C-S bond to release the aldehyde product. This compound undergoes spontaneous cyclization and dehydration to give a dienamine which is reverse prenylated at C-2 by the reverse prenyltransferase phqJ. The other prenyltransferase present in the cluster, phqI may be a redundant gene in the pathway. During biosynthetic assembly, the key step to produce the polycyclic core is catalyzed by the bifunctional reductase and intramolecular [4+2] Diels-Alderase, phqE, resulting in formation of the [2.2.2] diazaoctane intermediate preparaherquamide. Following formation of preparaherquamide, an indole 2,3-epoxidation-initiated pinacol-like rearrangement is catalyzed by the phqK FAD-dependent monooxygenase. The prenyltransferase phqA, the cytochrome P450 monooxygenase phqL, and the FAD-linked oxidoreductase phqH (or the cytochrome P450 monooxygenase phqM), are proposed to be involved in the formation of the pyran ring. The FAD-dependent monooxygenase phqK is likely responsible for generation of the spiro-oxindole, and the N-methylation is likely mediated by the phqN methyltransferase leading to the isolable natural product paraherquamide F. However, the order of these biosynthetic steps has still to be determined. In late-stage paraherquamide biosynthesis, the third P450 monooxygenase, phqO, is probably responsible for the C-14 hydroxylation, transforming paraherquamide F to paraherquamide G, and paraherquamide E to the final product paraherquamide A. The expansion from the 6-membered ring pyran (in paraherquamides F and G) to the 7-membered dioxepin ring (in paraherquamides A and E) represents a poorly understood but intriguing process that probably involves the 2-oxoglutarate-dependent dioxygenase phqC. Finally, the remaining members of the paraherquamide cluster, including phqI as well as phqM (or phqH), do not have a clearly prescribed role and appear to be redundant. The protein is Short-chain dehydrogenase/reductase phqE of Penicillium fellutanum.